The chain runs to 681 residues: MADSTGLQFTVKVGALPENTFVVAEFALDEALNRPFNLRLELASAQPDIDFGAVLDQPCELLVWYNGELQRRVCGVVSDFAQGDSGFRRTRYQLMVQPALWRLSLRQNSRIFQAQKPDEILSILLQEHGITDYAFALKNEHAKREYCVQYRETGLDFVNRLAAEEGMFYFHEFEVGKHRIVFADDSAALTAGPELFFNLGNRSLEQGPYVRQFHYREAVRPSDVELKDYSFKTPAYGLSHKKVGAELTHQRDTYQHFDFPGRYKEDPSGKAFAQHRLDALRNDAVAGSGKSNSSALQPGQTFSLTEHPNDSLNTDWQIVRIQHTGLQSQALEEEGGSGPTVYHNEFGVVKASTTWRARIGSPEAPHKPMVDGPQIAVVVGPEGEEIYCDEHGRVKLQFPWDRYGSSNDQSSCWVRVSQGWAGGQYGMMAIPRIGHEVIVSFLEGDPDQPIVTGRTYHATNRPPYELPANKTRTVLRTETHQGEGFNELRFEDQAGKEEIYIHGQKDLNVLIENDAAWHIKHDQHTDIDNERVTRIKANDHLTVEGEKRDQIKADYSLTVDASLHQKLGQSLLVEAGSEVHHKAGMKIVMEAGAELTLKVGGSFVKIDPSGVTLSGGSIKMNSGGSPGSGSGWAGQMPIQPGAVEVVAPPPPMDPARQIATLKSAEPVCEICEQLARQEGGG.

The segment at 284-309 is disordered; sequence AVAGSGKSNSSALQPGQTFSLTEHPN. Positions 289-309 are enriched in polar residues; that stretch reads GKSNSSALQPGQTFSLTEHPN.

Belongs to the VgrG protein family.

In terms of biological role, part of the type VI secretion system specialized secretion system, which delivers several virulence factors in both prokaryotic and eukaryotic cells during infection. Plays an essential role in bacterial mobility and biofilm formation. The sequence is that of Type VI secretion system spike protein VgrG2 from Aeromonas hydrophila.